The chain runs to 153 residues: D-amino acid oxidase regulator (153 aa).

Residues 1–25 (MLEKLMGADSLQLFRSRYTLGKIYF) form an involved in targeting to the mitochondrion region. An interaction with DAO region spans residues 138 to 153 (KDQSCNHKEITSTKAE).

In terms of assembly, interacts with DAO (D-amino acid oxidase); the interaction is direct, can occur in the presence or absence of FAD or substrate bound to DAO, and results in a complex containing two DAO homodimers and two DAOA monomers. Interacts with DDO (D-aspartate oxidase); the interaction is direct. Interacts wih SOD1; the interaction is direct. Interacts with MSRB2; the interaction is direct. Expressed in the amygdala and in astrocytes of the cortex (at protein level). Expressed in the caudate nucleus, spinal cord and testis.

It is found in the cytoplasm. The protein localises to the cytosol. The protein resides in the golgi apparatus. Its subcellular location is the mitochondrion. In terms of biological role, may suppress DAO (D-amino acid oxidase) and SOD1 activity and promote their degradation. Has conversely also been suggested to function as a DAO activator. May stimulate the degradation of DDO (D-aspartate oxidase). May play a role in mitochondrial fission. The polypeptide is D-amino acid oxidase regulator (DAOA) (Homo sapiens (Human)).